Here is a 372-residue protein sequence, read N- to C-terminus: Probable E3 ubiquitin-protein ligase makorin-1 (372 aa).

C3H1-type zinc fingers lie at residues Lys-20–Thr-45 and Lys-48–Pro-75. Residues Asn-78 to Gln-110 form a disordered region. Residues Ser-93–Pro-103 are compositionally biased toward low complexity. Residues Ala-153 to Val-180 form a C3H1-type 3 zinc finger. A makorin-type Cys-His region spans residues Cys-181–His-208. An RING-type zinc finger spans residues Cys-226–Arg-280. A C3H1-type 4 zinc finger spans residues Gly-309–Pro-338.

The catalysed reaction is S-ubiquitinyl-[E2 ubiquitin-conjugating enzyme]-L-cysteine + [acceptor protein]-L-lysine = [E2 ubiquitin-conjugating enzyme]-L-cysteine + N(6)-ubiquitinyl-[acceptor protein]-L-lysine.. The protein operates within protein modification; protein ubiquitination. E3 ubiquitin ligase catalyzing the covalent attachment of ubiquitin moieties onto substrate proteins. The polypeptide is Probable E3 ubiquitin-protein ligase makorin-1 (Tetraodon nigroviridis (Spotted green pufferfish)).